Consider the following 244-residue polypeptide: Phosphoribosylaminoimidazole-succinocarboxamide synthase (244 aa).

The protein belongs to the SAICAR synthetase family.

It catalyses the reaction 5-amino-1-(5-phospho-D-ribosyl)imidazole-4-carboxylate + L-aspartate + ATP = (2S)-2-[5-amino-1-(5-phospho-beta-D-ribosyl)imidazole-4-carboxamido]succinate + ADP + phosphate + 2 H(+). It functions in the pathway purine metabolism; IMP biosynthesis via de novo pathway; 5-amino-1-(5-phospho-D-ribosyl)imidazole-4-carboxamide from 5-amino-1-(5-phospho-D-ribosyl)imidazole-4-carboxylate: step 1/2. The polypeptide is Phosphoribosylaminoimidazole-succinocarboxamide synthase (Prochlorococcus marinus (strain SARG / CCMP1375 / SS120)).